The following is a 123-amino-acid chain: Ribosome-binding factor A (123 aa).

The protein belongs to the RbfA family. Monomer. Binds 30S ribosomal subunits, but not 50S ribosomal subunits or 70S ribosomes.

Its subcellular location is the cytoplasm. Functionally, one of several proteins that assist in the late maturation steps of the functional core of the 30S ribosomal subunit. Associates with free 30S ribosomal subunits (but not with 30S subunits that are part of 70S ribosomes or polysomes). Required for efficient processing of 16S rRNA. May interact with the 5'-terminal helix region of 16S rRNA. This is Ribosome-binding factor A from Chlorobium chlorochromatii (strain CaD3).